The primary structure comprises 1059 residues: MPPPPHQKPENVLKRAHELIGVNQAPAALTLLHEHITSKRSRNVPIASLEPVMLLLVELSVEQKKGKLAKDALYQYKNIAQNTNVATIELVLKKFIELAAEKVTAAQAKADEVQSSIEATTSNIDDLEASETPESILLATVSGEQSRDRTDRAIVTPWLKFLWEAYRTVLDILRNNARLEVLYQSTAMQAFDFCLKYTRKTEFRRLCELLRNHVQTAAKYSAQMHAINLNDPDTLQRHLETRFQQLNVAVELELWQEAFRSVEDIHTLLSLSKRPAKNVMMANYYEKLTRIFLVGENYLFHAAAWARYYNLLRQSAALIASGHSKKADNPACSDADLQRAATFVILSALSIPVISTSRSRGAMVDFDEARKNKNSRLTHLLGMAQAPTRAGLFRDALSKSLLRRAQPQIRDLYNILEVDFHPLSICQKISPILAEIGADAEMQKYILPLQQVILTRLFQQLSQVYETVDLEFVESLAQFPEPFQVTRGTIEKFIMNGNKKGDLAIRMDHATGVLSFDADVFSSAKAVHAGSSAGSAESETGSVQRLQSTPSQIVRSQLTRLAEALYTTCRYIDPSFNEARIKARDEALARAKAGAEKEHQEVLARKEIIQTRKDKASEAQAQKEKENARKKLLQEQALQQAEAARLAEEQKLREAKRLANEREQIKRKEVEALLKDMKLEELQGEDIETLDSNKIRMIKLQQLEREKNSVAEKLRITGKRLDHLERAFRKEEAKKLPEDYAKQRERDLAAYERTKAQTLKEAELKHKADVELKHRLTRLMPFYESFRSDLHERRRDEFEKRRRDAEREMEKQINARRKEAREKRIREKREREERERQLREAEERAAREKEEERKRLEARREELQRLKEEKEKEREKLREIAARQQQREEEAMARRKAEKEKLAATPSAYRPPAAAERTEAAAPPRIALAGNRPSWREREAAKAASGETAAPAPAAAEPVAERPRAAAPPAERTEAAAPPRLALAGNRPSWREREAAKAASGGGNAAAVPERSAPPLRAAAPQRAGSGRPENDRDVPPAEPLKASGAPGKYVPKWRREGA.

Positions 99 to 130 form a coiled coil; sequence AAEKVTAAQAKADEVQSSIEATTSNIDDLEAS. One can recognise a PCI domain in the interval 337–521; the sequence is LQRAATFVIL…GVLSFDADVF (185 aa). The stretch at 586 to 905 forms a coiled coil; that stretch reads EALARAKAGA…KAEKEKLAAT (320 aa). The span at 794 to 902 shows a compositional bias: basic and acidic residues; that stretch reads RRDEFEKRRR…ARRKAEKEKL (109 aa). The disordered stretch occupies residues 794 to 1059; sequence RRDEFEKRRR…YVPKWRREGA (266 aa). 4 stretches are compositionally biased toward low complexity: residues 908-927, 942-958, 965-988, and 1005-1024; these read AYRP…PRIA, KAAS…AAEP, AAAP…GNRP, and AAAV…PQRA.

It belongs to the eIF-3 subunit A family. In terms of assembly, component of the eukaryotic translation initiation factor 3 (eIF-3) complex.

The protein localises to the cytoplasm. Functionally, RNA-binding component of the eukaryotic translation initiation factor 3 (eIF-3) complex, which is involved in protein synthesis of a specialized repertoire of mRNAs and, together with other initiation factors, stimulates binding of mRNA and methionyl-tRNAi to the 40S ribosome. The eIF-3 complex specifically targets and initiates translation of a subset of mRNAs involved in cell proliferation. The sequence is that of Eukaryotic translation initiation factor 3 subunit A (eif3a) from Neurospora crassa (strain ATCC 24698 / 74-OR23-1A / CBS 708.71 / DSM 1257 / FGSC 987).